We begin with the raw amino-acid sequence, 175 residues long: Adenine phosphoribosyltransferase (175 aa).

It belongs to the purine/pyrimidine phosphoribosyltransferase family. Homodimer.

The protein localises to the cytoplasm. It carries out the reaction AMP + diphosphate = 5-phospho-alpha-D-ribose 1-diphosphate + adenine. The protein operates within purine metabolism; AMP biosynthesis via salvage pathway; AMP from adenine: step 1/1. Catalyzes a salvage reaction resulting in the formation of AMP, that is energically less costly than de novo synthesis. The sequence is that of Adenine phosphoribosyltransferase from Oenococcus oeni (strain ATCC BAA-331 / PSU-1).